A 698-amino-acid chain; its full sequence is Inner centromere protein SLI15 (698 aa).

Ser-268 carries the phosphoserine modification. Disordered stretches follow at residues 365 to 390 (KNKI…FDKT), 405 to 444 (EQKK…EVKN), and 455 to 474 (RPTK…TSQT). Composition is skewed to polar residues over residues 422–439 (RPHS…SSPS) and 459–474 (ASIS…TSQT). Ser-489 bears the Phosphoserine mark. The segment at 535 to 560 (IMRSQQEHHRRKQEKQKRMSHLEQDL) is disordered. The segment covering 550-560 (QKRMSHLEQDL) has biased composition (basic and acidic residues).

Belongs to the INCENP family. As to quaternary structure, component of the CPC complex at least composed of IPL1, BIR1 and SLI15. Post-translationally, phosphorylated by serine/threonine protein kinase IPL1.

It localises to the nucleus. Its subcellular location is the cytoplasm. The protein resides in the cytoskeleton. The protein localises to the spindle. It is found in the chromosome. It localises to the centromere. Its subcellular location is the kinetochore. Functionally, component of the chromosomal passenger complex (CPC), a complex that acts as a key regulator of mitosis. Stimulates IPL1 kinase activity and facilitates its association with the mitotic spindle. Has a role in attaching the kinetochores to the microtubules and ensuring that sister kinetochores connect to opposite poles. The polypeptide is Inner centromere protein SLI15 (SLI15) (Saccharomyces cerevisiae (strain ATCC 204508 / S288c) (Baker's yeast)).